We begin with the raw amino-acid sequence, 507 residues long: Ribose import ATP-binding protein RbsA 2 (507 aa).

ABC transporter domains are found at residues 7 to 245 (FSLD…VGRN) and 249 to 498 (LFTR…MPQS). Residue 39 to 46 (GENGAGKS) coordinates ATP.

The protein belongs to the ABC transporter superfamily. Ribose importer (TC 3.A.1.2.1) family. As to quaternary structure, the complex is composed of an ATP-binding protein (RbsA), two transmembrane proteins (RbsC) and a solute-binding protein (RbsB).

The protein resides in the cell inner membrane. The catalysed reaction is D-ribose(out) + ATP + H2O = D-ribose(in) + ADP + phosphate + H(+). Part of the ABC transporter complex RbsABC involved in ribose import. Responsible for energy coupling to the transport system. The protein is Ribose import ATP-binding protein RbsA 2 of Mesorhizobium japonicum (strain LMG 29417 / CECT 9101 / MAFF 303099) (Mesorhizobium loti (strain MAFF 303099)).